Here is a 133-residue protein sequence, read N- to C-terminus: Ribonuclease P protein component (133 aa).

Belongs to the RnpA family. As to quaternary structure, consists of a catalytic RNA component (M1 or rnpB) and a protein subunit.

The enzyme catalyses Endonucleolytic cleavage of RNA, removing 5'-extranucleotides from tRNA precursor.. RNaseP catalyzes the removal of the 5'-leader sequence from pre-tRNA to produce the mature 5'-terminus. It can also cleave other RNA substrates such as 4.5S RNA. The protein component plays an auxiliary but essential role in vivo by binding to the 5'-leader sequence and broadening the substrate specificity of the ribozyme. The sequence is that of Ribonuclease P protein component from Pseudomonas savastanoi pv. phaseolicola (strain 1448A / Race 6) (Pseudomonas syringae pv. phaseolicola (strain 1448A / Race 6)).